Consider the following 262-residue polypeptide: GTP cyclohydrolase 1 type 2 homolog (262 aa).

A divalent metal cation-binding residues include His65, Asp102, His222, and Glu225.

This sequence belongs to the GTP cyclohydrolase I type 2/NIF3 family. As to quaternary structure, homohexamer.

This is GTP cyclohydrolase 1 type 2 homolog from Streptococcus pyogenes serotype M3 (strain ATCC BAA-595 / MGAS315).